The chain runs to 410 residues: Translation initiation factor 2 subunit gamma (410 aa).

Positions 6-203 (QSEVNIGMVG…AIQDFIPTPE (198 aa)) constitute a tr-type G domain. Residues 15–22 (GHVDHGKT) form a G1 region. Positions 18, 22, 43, and 45 each coordinate Mg(2+). Residue 18–23 (DHGKTS) coordinates GTP. Positions 43–47 (GISIR) are G2. Residues Cys-58, Cys-61, Cys-73, and Cys-76 each coordinate Zn(2+). The segment at 90-93 (DAPG) is G3. GTP is bound by residues 146–149 (NKID) and 181–183 (SAH). The interval 146-149 (NKID) is G4. Positions 181–183 (SAH) are G5.

It belongs to the TRAFAC class translation factor GTPase superfamily. Classic translation factor GTPase family. EIF2G subfamily. As to quaternary structure, heterotrimer composed of an alpha, a beta and a gamma chain. Requires Mg(2+) as cofactor.

The enzyme catalyses GTP + H2O = GDP + phosphate + H(+). In terms of biological role, eIF-2 functions in the early steps of protein synthesis by forming a ternary complex with GTP and initiator tRNA. The protein is Translation initiation factor 2 subunit gamma of Methanococcus maripaludis (strain DSM 14266 / JCM 13030 / NBRC 101832 / S2 / LL).